The following is a 461-amino-acid chain: Cyclic 2,3-diphosphoglycerate synthetase (461 aa).

This sequence belongs to the cyclic 2,3-diphosphoglycerate synthetase family.

Its subcellular location is the cytoplasm. It carries out the reaction (2R)-2,3-bisphosphoglycerate + ATP + H(+) = cyclic (2R)-2,3-bisphosphoglycerate + ADP + phosphate. Functionally, catalyzes the formation of cyclic 2,3-diphosphoglycerate (cDPG) by formation of an intramolecular phosphoanhydride bond at the expense of ATP. In Methanosphaera stadtmanae (strain ATCC 43021 / DSM 3091 / JCM 11832 / MCB-3), this protein is Cyclic 2,3-diphosphoglycerate synthetase.